We begin with the raw amino-acid sequence, 226 residues long: PKHD-type hydroxylase PFL_0865 (226 aa).

The region spanning 78–178 (KVFPPLINCY…RYASFFWTQS (101 aa)) is the Fe2OG dioxygenase domain. Residues His96, Asp98, and His159 each contribute to the Fe cation site. Arg169 lines the 2-oxoglutarate pocket.

Requires Fe(2+) as cofactor. It depends on L-ascorbate as a cofactor.

The chain is PKHD-type hydroxylase PFL_0865 from Pseudomonas fluorescens (strain ATCC BAA-477 / NRRL B-23932 / Pf-5).